Reading from the N-terminus, the 168-residue chain is Photosystem I assembly protein Ycf3 (168 aa).

TPR repeat units lie at residues 35–68 (AFTY…EIDP), 72–105 (SYIL…NPFL), and 120–153 (GEQA…TPGN).

It belongs to the Ycf3 family.

It localises to the plastid. The protein resides in the chloroplast thylakoid membrane. Essential for the assembly of the photosystem I (PSI) complex. May act as a chaperone-like factor to guide the assembly of the PSI subunits. In Buxus microphylla (Littleleaf boxwood), this protein is Photosystem I assembly protein Ycf3.